The chain runs to 505 residues: Catalase (505 aa).

Active-site residues include histidine 56 and asparagine 129. Tyrosine 339 is a binding site for heme.

The protein belongs to the catalase family. Requires heme as cofactor.

The protein localises to the cytoplasm. It carries out the reaction 2 H2O2 = O2 + 2 H2O. Decomposes hydrogen peroxide into water and oxygen; serves to protect cells from the toxic effects of hydrogen peroxide. The polypeptide is Catalase (katA) (Helicobacter pylori (strain ATCC 700392 / 26695) (Campylobacter pylori)).